The primary structure comprises 419 residues: Serine--tRNA ligase (419 aa).

An L-serine-binding site is contributed by 225–227 (TAE). 256 to 258 (RKE) lines the ATP pocket. L-serine is bound at residue Glu-279. 343–346 (EISS) contacts ATP. L-serine is bound at residue Ser-378.

It belongs to the class-II aminoacyl-tRNA synthetase family. Type-1 seryl-tRNA synthetase subfamily. Homodimer. The tRNA molecule binds across the dimer.

The protein resides in the cytoplasm. It carries out the reaction tRNA(Ser) + L-serine + ATP = L-seryl-tRNA(Ser) + AMP + diphosphate + H(+). It catalyses the reaction tRNA(Sec) + L-serine + ATP = L-seryl-tRNA(Sec) + AMP + diphosphate + H(+). The protein operates within aminoacyl-tRNA biosynthesis; selenocysteinyl-tRNA(Sec) biosynthesis; L-seryl-tRNA(Sec) from L-serine and tRNA(Sec): step 1/1. Catalyzes the attachment of serine to tRNA(Ser). Is also able to aminoacylate tRNA(Sec) with serine, to form the misacylated tRNA L-seryl-tRNA(Sec), which will be further converted into selenocysteinyl-tRNA(Sec). This Pelagibacter ubique (strain HTCC1062) protein is Serine--tRNA ligase.